Consider the following 326-residue polypeptide: Protein LEG1 homolog (326 aa).

The first 22 residues, 1–22, serve as a signal peptide directing secretion; the sequence is MKSNKTIFLILLFLINFNSIYS. Residues Asn-58, Asn-85, Asn-165, Asn-226, and Asn-245 are each glycosylated (N-linked (GlcNAc...) asparagine).

Belongs to the LEG1 family.

The protein localises to the secreted. The sequence is that of Protein LEG1 homolog from Dictyostelium discoideum (Social amoeba).